Here is a 271-residue protein sequence, read N- to C-terminus: Zinc finger CCHC domain-containing protein 9 (271 aa).

The interval 1–67 (MTRWARVTTS…RKKNKKKKEY (67 aa)) is disordered. Polar residues predominate over residues 7-20 (VTTSNSKRPLSATS). Basic and acidic residues predominate over residues 22–33 (EDMKKGSVERAD). A compositionally biased stretch (polar residues) spans 35–46 (SLPNRKQCQSSR). The segment covering 56–65 (AKRKKNKKKK) has biased composition (basic residues). CCHC-type zinc fingers lie at residues 128–145 (MVCF…DCPA), 155–172 (GICY…KCRA), 184–201 (AKCF…SCPD), and 211–228 (GSCK…DCRE).

As to expression, detected in brain cortex and in testis.

The protein resides in the nucleus. Its subcellular location is the nucleolus. May down-regulate transcription mediated by NF-kappa-B and the serum response element. This is Zinc finger CCHC domain-containing protein 9 (Zcchc9) from Mus musculus (Mouse).